The sequence spans 1174 residues: Pecanex-like protein 4 (1174 aa).

A run of 14 helical transmembrane segments spans residues 40–60 (IYVN…TGTL), 72–92 (AAAL…LISV), 140–160 (TVFH…YLLP), 173–193 (TAVL…SLIV), 217–237 (LYIF…NIPA), 244–264 (ILHI…LPPP), 284–304 (SMST…AAVV), 307–327 (FIPS…LLSL), 366–386 (FLFI…HHYV), 394–414 (SGAQ…VWIL), 451–471 (IGAV…VAFL), 543–563 (LIQF…LWTE), 580–600 (VFAP…SPLL), and 643–663 (LTAA…LPGS). The segment covering 785–797 (PSTQENKTENTGE) has biased composition (polar residues). Residues 785–875 (PSTQENKTEN…DDHSAGTGPK (91 aa)) form a disordered region. Asparagine 790 carries an N-linked (GlcNAc...) asparagine glycan. Positions 798–810 (ASPALPPAANSSP) are enriched in low complexity. Basic and acidic residues predominate over residues 835 to 846 (PAIKNRKEKLQS). Residues asparagine 1122 and asparagine 1149 are each glycosylated (N-linked (GlcNAc...) asparagine).

This sequence belongs to the pecanex family.

It localises to the membrane. In Mus musculus (Mouse), this protein is Pecanex-like protein 4.